Reading from the N-terminus, the 254-residue chain is MADSPNRLNRAKIDSTTMKDPRVLNNLKLRELLLPKFTSLWEIQTEVTVDNRTILLTWMHLLCESFELDKSVFPLSVSILDRYLCKKQGTKKTLQKIGAACVLIGSKIRTVKPMTVSKLTYLSCDCFTNLELINQEKDILEALKWDTEAVLATDFLIPLCNALKIPEDLWPQLYEAASTTICKALIQPNIALLSPGLICAGGLLTTIETDNTNCRPWTCYLEDLSSILNFSTNTVRTVKDQVSEAFSLYDLEIL.

It belongs to the cyclin family. Cyclin D subfamily.

Its function is as follows. May be highly relevant to the process of cellular transformation and rapid T-cell proliferation effected by HVS during latent infections of T-cells in susceptible hosts. The polypeptide is Cyclin homolog (72) (Saimiriine herpesvirus 2 (strain 11) (SaHV-2)).